Consider the following 328-residue polypeptide: ATP-dependent 6-phosphofructokinase (328 aa).

G11 contributes to the ATP binding site. 21–25 (RAAVR) contributes to the ADP binding site. ATP-binding positions include 72–73 (RS) and 102–105 (GNGT). N103 is a Mg(2+) binding site. 126-128 (TID) contacts substrate. The Proton acceptor role is filled by D128. R155 serves as a coordination point for ADP. Substrate-binding positions include R163 and 170–172 (MGR). ADP is bound by residues 186–188 (GAE) and 214–216 (KAS). Substrate contacts are provided by residues E223, R247, and 253–256 (HVQR).

It belongs to the phosphofructokinase type A (PFKA) family. ATP-dependent PFK group I subfamily. Prokaryotic clade 'B1' sub-subfamily. In terms of assembly, homotetramer. It depends on Mg(2+) as a cofactor.

Its subcellular location is the cytoplasm. The catalysed reaction is beta-D-fructose 6-phosphate + ATP = beta-D-fructose 1,6-bisphosphate + ADP + H(+). It participates in carbohydrate degradation; glycolysis; D-glyceraldehyde 3-phosphate and glycerone phosphate from D-glucose: step 3/4. Its activity is regulated as follows. Allosterically activated by ADP and other diphosphonucleosides, and allosterically inhibited by phosphoenolpyruvate. Catalyzes the phosphorylation of D-fructose 6-phosphate to fructose 1,6-bisphosphate by ATP, the first committing step of glycolysis. The protein is ATP-dependent 6-phosphofructokinase of Cytophaga hutchinsonii (strain ATCC 33406 / DSM 1761 / CIP 103989 / NBRC 15051 / NCIMB 9469 / D465).